The primary structure comprises 718 residues: Sodium/myo-inositol cotransporter (718 aa).

The Extracellular portion of the chain corresponds to 1-9 (MRAVLEAAD). Residues 10–29 (IAVVALYFILVMCIGFFAMW) form a helical membrane-spanning segment. The Cytoplasmic portion of the chain corresponds to 30-38 (KSNRSTVSG). The helical transmembrane segment at 39–57 (YFLAGRSMTWVAIGASLFV) threads the bilayer. Over 58 to 86 (SNIGSEHFIGLAGSGAASGFAVGAWEFNA) the chain is Extracellular. The helical transmembrane segment at 87 to 110 (LLLLQLLGWVFIPIYIRSGVYTMP) threads the bilayer. The Cytoplasmic segment spans residues 111-123 (EYLSKRFGGHRIQ). A helical membrane pass occupies residues 124 to 144 (VYFAALSLLLYIFTKLSVDLY). Residues 145-157 (SGALFIQESLGWN) lie on the Extracellular side of the membrane. A helical transmembrane segment spans residues 158-183 (LYVSVILLIGMTALLTVTGGLVAVIY). The Cytoplasmic segment spans residues 184-186 (TDT). A helical transmembrane segment spans residues 187–205 (LQALLMIIGALTLMVISMV). The Extracellular portion of the chain corresponds to 206-303 (KIGGFEEVKR…HAKGSTLMAG (98 aa)). N-linked (GlcNAc...) asparagine glycosylation occurs at Asn232. The chain crosses the membrane as a helical span at residues 304–324 (FLKLLPMFIIVVPGMISRIVF). The Cytoplasmic portion of the chain corresponds to 325-353 (ADEIACINPEHCMQVCGSRAGCSNIAYPR). A helical transmembrane segment spans residues 354–376 (LVMTLVPVGLRGLMMAVMIAALM). Residues 377 to 406 (SDLDSIFNSASTIFTLDVYKLIRKSASSRE) lie on the Extracellular side of the membrane. Residues 407 to 430 (LMIVGRIFVAFMVVISIAWVPIIV) traverse the membrane as a helical segment. Topologically, residues 431-443 (EMQGGQMYLYIQE) are cytoplasmic. Residues 444-462 (VADYLTPPVAALFLLAIFW) form a helical membrane-spanning segment. The Extracellular segment spans residues 463-510 (KRCNEQGAFYGGMAGFVLGAVRLILAFTYRAPECDQPDNRPGFIKDIH). A helical membrane pass occupies residues 511–532 (YMYVATALFWITGLITVIVSLL). At 533–695 (TPPPTKDQIR…QMLEETPQVK (163 aa)) the chain is on the cytoplasmic side. Ser594 and Ser632 each carry phosphoserine. A helical transmembrane segment spans residues 696–716 (VILNIGLFAVCSLGIFMFVYF). At 717 to 718 (SL) the chain is on the extracellular side.

Belongs to the sodium:solute symporter (SSF) (TC 2.A.21) family. As to quaternary structure, interacts with KCNQ2 (via the pore module). Interacts with KCNQ1; this interaction is direct. Forms coregulatory complexes with ion channels KCNQ2-KCNQ3 and KCNQ1-KCNE2. In terms of tissue distribution, highly expressed in kidney, placenta, and brain and at a lesser extent in thymus, lung, bladder, and testes. Expressed in the choroid plexus epithelium (at protein level).

Its subcellular location is the apical cell membrane. The protein localises to the basolateral cell membrane. The enzyme catalyses myo-inositol(out) + 2 Na(+)(out) = myo-inositol(in) + 2 Na(+)(in). It carries out the reaction scyllo-inositol(out) + 2 Na(+)(out) = scyllo-inositol(in) + 2 Na(+)(in). Functionally, electrogenic Na(+)-coupled sugar symporter that actively transports myo-inositol and its stereoisomer scyllo-inositol across the plasma membrane, with a Na(+) to sugar coupling ratio of 2:1. Maintains myo-inositol concentration gradient that defines cell volume and fluid balance during osmotic stress, in particular in the fetoplacental unit and central nervous system. Forms coregulatory complexes with voltage-gated K(+) ion channels, allosterically altering ion selectivity, voltage dependence and gating kinetics of the channel. In turn, K(+) efflux through the channel forms a local electrical gradient that modulates electrogenic Na(+)-coupled myo-inositol influx through the transporter. Associates with KCNQ1-KCNE2 channel in the apical membrane of choroid plexus epithelium and regulates the myo-inositol gradient between blood and cerebrospinal fluid with an impact on neuron excitability. Associates with KCNQ2-KCNQ3 channel altering ion selectivity, increasing Na(+) and Cs(+) permeation relative to K(+) permeation. Provides myo-inositol precursor for biosynthesis of phosphoinositides such as PI(4,5)P2, thus indirectly affecting the activity of phosphoinositide-dependent ion channels and Ca(2+) signaling upon osmotic stress. (Microbial infection) Functions as a retroviral receptor for M813 murine leukemia virus (MuLV) entry. The sequence is that of Sodium/myo-inositol cotransporter (Slc5a3) from Mus musculus (Mouse).